We begin with the raw amino-acid sequence, 2159 residues long: Calpain-type cysteine protease DEK1 (2159 aa).

The first 33 residues, 1–33, serve as a signal peptide directing secretion; that stretch reads MEGEGHHGVVLACSICGFLFAVLSPFSFWVLWA. Residues 34–70 lie on the Extracellular side of the membrane; the sequence is VNWRPWRLYSWIYARKWPTYVQGPQLSTLCSLLTLCA. The helical transmembrane segment at 71–91 threads the bilayer; sequence WLVVISPIAVLLVWGSVLIAL. Residues 92–95 are Cytoplasmic-facing; the sequence is MERN. A helical transmembrane segment spans residues 96 to 116; the sequence is IIGLAVIMAGVALLLSFYSIM. Topologically, residues 117–127 are extracellular; it reads LWWRTQWQSSE. The helical transmembrane segment at 128-148 threads the bilayer; that stretch reads AVAYLLLLAVCLLCAYDFCAI. The Cytoplasmic segment spans residues 149-164; that stretch reads YVTAGASASELNSPSG. The chain crosses the membrane as a helical span at residues 165 to 185; it reads FFFGVSVISLAINMLFICKIL. Topologically, residues 186–236 are extracellular; that stretch reads FNVSGFDVDEYVRRSYKFAYSDCVEVAPVSCSPEPPDPSELYMTKSSRVKH. A helical membrane pass occupies residues 237 to 257; that stretch reads LGLLYISSLLVLVGYSILYGL. Over 258 to 264 the chain is Cytoplasmic; sequence TSKEARW. Residues 265–285 form a helical membrane-spanning segment; that stretch reads LGALTSVAVVILDWNLGLCSF. The Extracellular portion of the chain corresponds to 286-294; sequence RFELLKSRM. A helical membrane pass occupies residues 295 to 315; sequence IVLFVAGTSRAFLVSFGVHYW. Over 316–320 the chain is Cytoplasmic; it reads YLGHC. A helical membrane pass occupies residues 321–341; it reads ISYAFVASVLLSAAVSSWLSI. Topologically, residues 342-623 are extracellular; it reads SNPSVARIDA…LIFHHLAGSP (282 aa). The tract at residues 365-409 is disordered; it reads RKGQNSSSNSSEGCGSSVKRSSGSVEAGQNGNAMDSMYRSNSQSD. Residues 369–381 show a composition bias toward low complexity; the sequence is NSSSNSSEGCGSS. The span at 382 to 409 shows a compositional bias: polar residues; it reads VKRSSGSVEAGQNGNAMDSMYRSNSQSD. The helical transmembrane segment at 624-644 threads the bilayer; the sequence is IRAFIVFTVMFIIETATVAIY. The Cytoplasmic portion of the chain corresponds to 645–660; it reads RPETIKVINATHEQFE. A helical transmembrane segment spans residues 661–681; the sequence is FGFSILLLSPVVCSIMAFIWS. At 682-694 the chain is on the extracellular side; the sequence is LRAEEMLMTSKPQ. Residues 695 to 715 form a helical membrane-spanning segment; that stretch reads KYGFIAWLLSTCVGLFLSFLS. Over 716 to 719 the chain is Cytoplasmic; sequence KSSV. Residues 720–740 form a helical membrane-spanning segment; it reads ILGLSLTVPLMVACLSFAVPI. At 741–770 the chain is on the extracellular side; it reads WIRNGYSFWIPGREFANRENVSQAPGEKER. A helical membrane pass occupies residues 771–791; it reads ALFVITIAVFTASIIGLGAIV. At 792 to 822 the chain is on the cytoplasmic side; the sequence is SAKPLDALGYKGWDADKNSSYSPYATSMYLG. The chain crosses the membrane as a helical span at residues 823 to 843; that stretch reads WALSSTIAVITTGLIPIVAWF. The Extracellular segment spans residues 844–853; sequence ATYRFSPSSA. The helical transmembrane segment at 854–874 threads the bilayer; the sequence is ICVGLFATVLVSFCGASYWGV. Residues 875–887 are Cytoplasmic-facing; the sequence is VNSREDGVPLKAD. Residues 888-908 traverse the membrane as a helical segment; sequence FLAALLPLLCIPAFFSLFTGL. Residues 909–921 are Extracellular-facing; that stretch reads YKWKDDDWKISRG. A helical transmembrane segment spans residues 922 to 942; sequence VYLFVGMGMLLLFGAVAAVIV. The Cytoplasmic portion of the chain corresponds to 943–946; the sequence is TIRP. Residues 947 to 967 form a helical membrane-spanning segment; the sequence is WTVGVACLVAILFLVFVIGVI. Topologically, residues 968-981 are extracellular; sequence HYWTSNNFYLTRTQ. Residues 982–1002 form a helical membrane-spanning segment; that stretch reads MLLVCSIAFLLALAAFLMGLF. The Cytoplasmic segment spans residues 1003 to 1016; that stretch reads HGKPFVGASIGYFS. A helical membrane pass occupies residues 1017–1037; it reads FIFLLTGRALTVLLSPPIVVY. Residues 1038–1060 lie on the Extracellular side of the membrane; it reads SPRVLPVYVYDAHADSAKNVSYA. The helical transmembrane segment at 1061–1081 threads the bilayer; the sequence is FLILYGIALATEVWGVIASLI. Topologically, residues 1082–2159 are cytoplasmic; sequence MNPPFVGAGV…SKASIRLEAV (1078 aa). Phosphoserine occurs at positions 1371 and 1376. The region spanning 1417–1609 is the Calpain catalytic 1 domain; that stretch reads TGRHCGELDL…MSPAEYGFFD (193 aa). The residue at position 1665 (Ser-1665) is a Phosphoserine. The 303-residue stretch at 1703 to 2005 folds into the Calpain catalytic 2 domain; sequence NFTDQEFPPE…FRSIYVCRVY (303 aa). Residues Cys-1769, His-1927, and Asn-1947 contribute to the active site.

Belongs to the peptidase C2 family. Post-translationally, autocatalytic proteolytic cleavage leading to the production of mainly cytoplasmic localized subproducts of about 85 and 120 kDa. As to expression, expressed in most tissues at low levels ranging from 30 to 55 ppm. Present in all endosperm cells at transcript level, but confined to aleurones at protein level.

The protein localises to the endoplasmic reticulum membrane. Its subcellular location is the cytoplasm. The protein resides in the cell membrane. It localises to the endosome membrane. Functionally, essential protease involved in epiderm development. Required for aleurone cell development in the endosperm probably by maintaining and restricting the aleurone and embryonic epidermal L1 cell-layer fates as well as meristems organization. Involved in the maintenance of adaxial/abaxial axis information in developing leaves, probably by regulating cell proliferation and expansion. Does not need calcium ions to be active. The chain is Calpain-type cysteine protease DEK1 (DEK1) from Zea mays (Maize).